A 503-amino-acid polypeptide reads, in one-letter code: Cobyric acid synthase (503 aa).

One can recognise a GATase cobBQ-type domain in the interval Asp255–Phe444. The active-site Nucleophile is the Cys337. Residue His436 is part of the active site.

The protein belongs to the CobB/CobQ family. CobQ subfamily.

The protein operates within cofactor biosynthesis; adenosylcobalamin biosynthesis. Catalyzes amidations at positions B, D, E, and G on adenosylcobyrinic A,C-diamide. NH(2) groups are provided by glutamine, and one molecule of ATP is hydrogenolyzed for each amidation. The polypeptide is Cobyric acid synthase (Geobacillus sp. (strain WCH70)).